The following is a 241-amino-acid chain: ATP synthase subunit a (241 aa).

A run of 5 helical transmembrane segments spans residues 21–41 (LASI…AIAC), 84–104 (VTLI…AIVI), 116–136 (DATV…YYGI), 183–203 (ILIG…WIIG), and 207–227 (LIAW…IFIM).

It belongs to the ATPase A chain family. As to quaternary structure, F-type ATPases have 2 components, CF(1) - the catalytic core - and CF(0) - the membrane proton channel. CF(1) has five subunits: alpha(3), beta(3), gamma(1), delta(1), epsilon(1). CF(0) has three main subunits: a(1), b(2) and c(9-12). The alpha and beta chains form an alternating ring which encloses part of the gamma chain. CF(1) is attached to CF(0) by a central stalk formed by the gamma and epsilon chains, while a peripheral stalk is formed by the delta and b chains.

The protein resides in the cell membrane. Its function is as follows. Key component of the proton channel; it plays a direct role in the translocation of protons across the membrane. This chain is ATP synthase subunit a, found in Staphylococcus carnosus (strain TM300).